The chain runs to 553 residues: MASRSSTRIPAPLMLTIWIALALGCVRLTSSLDGRPLAAAGIVVTGDKAVNIYTSSQTGSIIIKLLPNMPKDKEACAKAPLEAYNRTLTTLLTPLGDSIRRIQESVTTSGGRRQRRFIGAIIGSVALGVATAAQITAASALIQANQNAANILRLKESIAATNEAVHEVTDGLSQLAVAVGKMQQFVNDQFNNTTQELDCIKITHEVGVELNLYLTELTTVFGPQITSPALNQLTIQALYNLAGGNMDYLLTKLGLGNNQLSSLIGSGLITGNPILYDSQTQLLGIQVTLPSVGNLNNMRATYLETSSVSTTKGFASALVPKVVTQVGSVIEELDTSYCIETDLDLYCTRIVTFPMSPGIYSCLTGNTSACMYSKTEGALTTPYMTLKGSVIANCKMTTCRCADPPGIISQNYGEAVSLIDRHSCNVLSLDGITLRLSGEFDAAYQKNVSILNSQVIVTGNLDISTELGNANNSISNALNKLEESNSKLDKVNVRLTNTSALITYIVLTVISLVCGILSLVLACYLMHKQKAQQKTLLWLGNNTLDQMRATTKA.

An N-terminal signal peptide occupies residues 1–31 (MASRSSTRIPAPLMLTIWIALALGCVRLTSS). At 32-500 (LDGRPLAAAG…VNVRLTNTSA (469 aa)) the chain is on the extracellular side. 5 disulfide bridges follow: Cys-76-Cys-199, Cys-338-Cys-347, Cys-362-Cys-370, Cys-394-Cys-399, and Cys-401-Cys-424. An N-linked (GlcNAc...) asparagine; by host glycan is attached at Asn-85. Residues 117–141 (FIGAIIGSVALGVATAAQITAASAL) form a fusion peptide region. Residues 142 to 170 (IQANQNAANILRLKESIAATNEAVHEVTD) are a coiled coil. 2 N-linked (GlcNAc...) asparagine; by host glycosylation sites follow: Asn-191 and Asn-192. N-linked (GlcNAc...) asparagine; by host glycosylation occurs at Asn-366. Asn-447 and Asn-471 each carry an N-linked (GlcNAc...) asparagine; by host glycan. The stretch at 466 to 491 (ELGNANNSISNALNKLEESNSKLDKV) forms a coiled coil. Residues 501–521 (LITYIVLTVISLVCGILSLVL) form a helical membrane-spanning segment. At 522–553 (ACYLMHKQKAQQKTLLWLGNNTLDQMRATTKA) the chain is on the cytoplasmic side. A lipid anchor (S-palmitoyl cysteine; by host) is attached at Cys-523.

The protein belongs to the paramyxoviruses fusion glycoprotein family. As to quaternary structure, homotrimer of disulfide-linked F1-F2. Post-translationally, the inactive precursor F0 is glycosylated and proteolytically cleaved into F1 and F2 to be functionally active. The cleavage is mediated by cellular proteases during the transport and maturation of the polypeptide.

It localises to the virion membrane. The protein resides in the host cell membrane. Functionally, class I viral fusion protein. Under the current model, the protein has at least 3 conformational states: pre-fusion native state, pre-hairpin intermediate state, and post-fusion hairpin state. During viral and plasma cell membrane fusion, the heptad repeat (HR) regions assume a trimer-of-hairpins structure, positioning the fusion peptide in close proximity to the C-terminal region of the ectodomain. The formation of this structure appears to drive apposition and subsequent fusion of viral and plasma cell membranes. Directs fusion of viral and cellular membranes leading to delivery of the nucleocapsid into the cytoplasm. This fusion is pH independent and occurs directly at the outer cell membrane. The trimer of F1-F2 (F protein) probably interacts with HN at the virion surface. Upon HN binding to its cellular receptor, the hydrophobic fusion peptide is unmasked and interacts with the cellular membrane, inducing the fusion between cell and virion membranes. Later in infection, F proteins expressed at the plasma membrane of infected cells could mediate fusion with adjacent cells to form syncytia, a cytopathic effect that could lead to tissue necrosis. This chain is Fusion glycoprotein F0 (F), found in Gallus gallus (Chicken).